The following is a 735-amino-acid chain: Protein STRUBBELIG-RECEPTOR FAMILY 2 (735 aa).

Residues 1-23 form the signal peptide; it reads MKTKQQLRFLATILLTTILFVLA. Residues 24-297 lie on the Extracellular side of the membrane; the sequence is KTDTDPLEVL…KKKKKGIGAG (274 aa). 8 LRR repeats span residues 78–94, 96–119, 120–140, 142–163, 165–187, 189–211, 212–232, and 233–253; these read LREL…LQHL, NLKI…PPNA, THIN…LPLM, SLQS…VFSG, QIKE…FGTL, NLTS…ADLP, LADL…HFQS, and IPHL…KPWK. Residues N118, N128, N147, N175, and N189 are each glycosylated (N-linked (GlcNAc...) asparagine). An N-linked (GlcNAc...) asparagine glycan is attached at N264. Residues 298–318 traverse the membrane as a helical segment; it reads STFLLVGGLALLGTFFALFAV. Residues 319–735 lie on the Cytoplasmic side of the membrane; that stretch reads RMNHRRAQNL…SSPTFSYLSS (417 aa). Residues 358 to 378 form a disordered region; it reads PQIKRFQPPPAPQLRHLPSPP. The region spanning 415-695 is the Protein kinase domain; that stretch reads FSEENLLGEG…EIVEALTALI (281 aa).

This sequence belongs to the protein kinase superfamily. Ser/Thr protein kinase family. Expressed in seedlings, roots, stems, leaves, flowers and siliques.

The protein localises to the membrane. The protein is Protein STRUBBELIG-RECEPTOR FAMILY 2 (SRF2) of Arabidopsis thaliana (Mouse-ear cress).